The following is a 240-amino-acid chain: Homeobox protein goosecoid (240 aa).

A DNA-binding region (homeobox) is located at residues 146–205 (KRRHRTIFTDEQLEALENLFQETKYPDVGTREQLARKVHLREEKVEVWFKNRRAKWRRQK). Residues 199-240 (AKWRRQKRSSSEESENSQKWNKSTKTTSEKIEEGKSDVDSDS) are disordered. Over residues 225 to 240 (TSEKIEEGKSDVDSDS) the composition is skewed to basic and acidic residues.

Belongs to the paired homeobox family. Bicoid subfamily.

Its subcellular location is the nucleus. The sequence is that of Homeobox protein goosecoid (gsc) from Danio rerio (Zebrafish).